The following is a 408-amino-acid chain: Peptidase T (408 aa).

Zn(2+) is bound at residue H78. D80 is an active-site residue. Zn(2+) is bound at residue D140. E173 acts as the Proton acceptor in catalysis. E174, D196, and H379 together coordinate Zn(2+).

Belongs to the peptidase M20B family. Zn(2+) is required as a cofactor.

The protein localises to the cytoplasm. The catalysed reaction is Release of the N-terminal residue from a tripeptide.. Its function is as follows. Cleaves the N-terminal amino acid of tripeptides. In Shigella boydii serotype 18 (strain CDC 3083-94 / BS512), this protein is Peptidase T.